A 227-amino-acid polypeptide reads, in one-letter code: Venom allergen 5.01 (227 aa).

A signal peptide spans 1–23; the sequence is MEIGGLVYLILIITIINLSFGET. 4 disulfide bridges follow: Cys-27–Cys-39, Cys-31–Cys-124, Cys-49–Cys-117, and Cys-193–Cys-210. The 145-residue stretch at 68–212 folds into the SCP domain; the sequence is LKRHNDFRQN…WYTHYLVCNY (145 aa).

The protein belongs to the CRISP family. Venom allergen 5-like subfamily. Expressed by the venom gland.

Its subcellular location is the secreted. The sequence is that of Venom allergen 5.01 from Dolichovespula maculata (Bald-faced hornet).